A 244-amino-acid chain; its full sequence is Claudin-12 (244 aa).

Topologically, residues 1 to 10 (MGCRDVHAAT) are cytoplasmic. The chain crosses the membrane as a helical span at residues 11-31 (VLSFLCGIASVAGLFAGTLLP). At 32 to 87 (NWRKLRLITFNRNEKNLTIYTGLWVKCARYDGSSDCLMYDRTWYLSVDQLDLRVLQ) the chain is on the extracellular side. The helical transmembrane segment at 88–108 (FALPLSIVIAMGALLLCLIGM) threads the bilayer. Residues 109-135 (CNTAFNSSVPNIKLAKCLVNSAGCHLV) lie on the Cytoplasmic side of the membrane. Residues 136 to 156 (AGLLFFLAGTVSLSPSIWAIF) traverse the membrane as a helical segment. Residues 157 to 174 (YNSHLNRKFEPVFTFDYA) lie on the Extracellular side of the membrane. The chain crosses the membrane as a helical span at residues 175–195 (VFVTIASSGGLFMTALLLFVW). The Cytoplasmic segment spans residues 196-244 (YCACKSLSSPFWQPLYSHAPGMHTYSQPYSSRSRLSAIEIDIPVVSHST). Phosphoserine occurs at positions 228 and 231.

Belongs to the claudin family. As to quaternary structure, interacts with OCLN.

The protein localises to the cell junction. The protein resides in the tight junction. It is found in the cell membrane. Its function is as follows. Plays a major role in tight junction-specific obliteration of the intercellular space, through calcium-independent cell-adhesion activity. The polypeptide is Claudin-12 (Cldn12) (Mus musculus (Mouse)).